Reading from the N-terminus, the 241-residue chain is Fatty acid metabolism regulator protein (241 aa).

The region spanning 11-79 (QSPAGLAEEY…HGKPTKVNNI (69 aa)) is the HTH gntR-type domain. The segment at residues 39–58 (ERELAEKIGVTRTTLREVLQ) is a DNA-binding region (H-T-H motif).

In terms of assembly, homodimer.

It is found in the cytoplasm. Functionally, multifunctional regulator of fatty acid metabolism. The polypeptide is Fatty acid metabolism regulator protein (Pasteurella multocida (strain Pm70)).